A 491-amino-acid chain; its full sequence is Cytochrome P450 monooxygenase olcB (491 aa).

A helical transmembrane segment spans residues 5 to 27 (LLLSLSVCLLYVFITAFWNLYIH). C435 lines the heme pocket.

Belongs to the cytochrome P450 family. It depends on heme as a cofactor.

Its subcellular location is the membrane. It functions in the pathway secondary metabolite biosynthesis; terpenoid biosynthesis. In terms of biological role, cytochrome P450 monooxygenase; part of the gene cluster that mediates the biosynthesis of 15-deoxyoxalicine B. The first step of the pathway is the synthesis of nicotinyl-CoA from nicotinic acid by the nicotinic acid-CoA ligase olcI. Nicotinyl-CoA is then a substrate of polyketide synthase olcA to produce 4-hydroxy-6-(3-pyridinyl)-2H-pyran-2-one (HPPO) which is further prenylated by the polyprenyl transferase olcH to yield geranylgeranyl-HPPO. Geranylgeranyl pyrophosphate is provided by the cluster-specific geranylgeranyl pyrophosphate synthase olcC. The FAD-dependent monooxygenase olcE catalyzes the epoxidation of geranylgeranyl-HPPO and the terpene cyclase olcD catalyzes the cyclization of the terpenoid component, resulting in the formation of the tricyclic terpene moiety seen in predecaturin E. The cytochrome P450 monooxygenase then catalyzes the allylic oxidation of predecaturin E, which is followed by spirocylization with concomitant loss of one molecule of water to form decaturin E. Decaturin E is the substrate of the cytochrome P450 monooxygenase olcJ which hydroxylates it at the C-29 position to form decaturin F. The short-chain dehydrogenase/reductase olcF may catalyze the oxidation of decaturin F to generate the 29-hydroxyl-27-one intermediate, and subsequent hemiacetal formation probably leads to the formation of decaturin C. The dioxygenase olcK may be a peroxisomal enzyme that catalyzes the hydroxylation of decaturin C into decaturin A once decaturin C is shuttled into the peroxisome by the MFS transporter olcL. Finally the cytochrome P450 monooxygenase olcB catalyzes the oxidative rearrangement to yield 15-deoxyoxalicine B. In the absence of olcJ, decaturin E may be shunted to a pathway in which it is oxidized to a ketone, possibly by olcF, to form decaturin D, which undergoes further allylic oxidation to yield decaturin G. Moreover, in the absence of oclK or oclL, oclB can convert decaturin C into 15-deoxyoxalicine A. The sequence is that of Cytochrome P450 monooxygenase olcB from Penicillium canescens.